The following is a 602-amino-acid chain: Aspartate--tRNA(Asp/Asn) ligase (602 aa).

Residue E176 coordinates L-aspartate. Residues 200–203 (QQFK) are aspartate. Residues R222 and H452 each coordinate L-aspartate. 222–224 (RDE) serves as a coordination point for ATP. E490 contacts ATP. R497 serves as a coordination point for L-aspartate. Residue 542–545 (GIDR) participates in ATP binding.

It belongs to the class-II aminoacyl-tRNA synthetase family. Type 1 subfamily. As to quaternary structure, homodimer.

The protein localises to the cytoplasm. It carries out the reaction tRNA(Asx) + L-aspartate + ATP = L-aspartyl-tRNA(Asx) + AMP + diphosphate. Functionally, aspartyl-tRNA synthetase with relaxed tRNA specificity since it is able to aspartylate not only its cognate tRNA(Asp) but also tRNA(Asn). Reaction proceeds in two steps: L-aspartate is first activated by ATP to form Asp-AMP and then transferred to the acceptor end of tRNA(Asp/Asn). The sequence is that of Aspartate--tRNA(Asp/Asn) ligase from Rickettsia canadensis (strain McKiel).